Here is a 179-residue protein sequence, read N- to C-terminus: Large ribosomal subunit protein eL18 (179 aa).

Belongs to the eukaryotic ribosomal protein eL18 family. In terms of assembly, component of the large ribosomal subunit.

The protein resides in the cytoplasm. Its subcellular location is the cytosol. It localises to the rough endoplasmic reticulum. Its function is as follows. Component of the large ribosomal subunit. The ribosome is a large ribonucleoprotein complex responsible for the synthesis of proteins in the cell. This chain is Large ribosomal subunit protein eL18 (rpl18), found in Salmo salar (Atlantic salmon).